The primary structure comprises 598 residues: Nuclear receptor subfamily 4 group A member 2 (598 aa).

A disordered region spans residues 1 to 22 (MPCVQAQYGSSPQGASPASQSY). Over residues 8–22 (YGSSPQGASPASQSY) the composition is skewed to low complexity. Positions 260 to 335 (EGLCAVCGDN…VGMVKEVVRT (76 aa)) form a DNA-binding region, nuclear receptor. 2 NR C4-type zinc fingers span residues 263–283 (CAVC…CEGC) and 299–323 (CLAN…FQKC). The Bipartite nuclear localization signal (NLS1) motif lies at 287 to 314 (FKRTVQKNAKYVCLANKNCPVDKRRRNR). Residues 337 to 361 (SLKGRRGRLPSKPKSPQEPSPPSPP) are disordered. Residues 338–350 (LKGRRGRLPSKPK) carry the Nuclear localization signal (NLS1) motif. A compositionally biased stretch (pro residues) spans 352–361 (PQEPSPPSPP). Residues 360–595 (PPVSLISALV…AIIDKLFLDT (236 aa)) enclose the NR LBD domain. Positions 443–452 (FLELFVLRLA) match the nuclear export sequence (NES1) motif. Residues 568–577 (QGLQRIFYLK) carry the nuclear export sequence (NES2) motif.

The protein belongs to the nuclear hormone receptor family. NR4 subfamily. In terms of assembly, interacts with SFPQ, NCOR2, SIN3A and HADC1. The interaction with NCOR2 increases in the absence of PITX3. Interacts with PER2. As to expression, expressed in a number of cell lines of T-cell, B-cell and fibroblast origin. Strong expression in brain tissue.

It localises to the cytoplasm. The protein resides in the nucleus. Functionally, transcriptional regulator which is important for the differentiation and maintenance of meso-diencephalic dopaminergic (mdDA) neurons during development. It is crucial for expression of a set of genes such as SLC6A3, SLC18A2, TH and DRD2 which are essential for development of mdDA neurons. This chain is Nuclear receptor subfamily 4 group A member 2 (NR4A2), found in Homo sapiens (Human).